The primary structure comprises 202 residues: D-alanyl-D-alanine dipeptidase (202 aa).

Zn(2+) contacts are provided by His116 and Asp123. Glu181 serves as the catalytic Proton donor/acceptor. His184 serves as a coordination point for Zn(2+).

This sequence belongs to the peptidase M15D family. Requires Zn(2+) as cofactor.

The catalysed reaction is D-alanyl-D-alanine + H2O = 2 D-alanine. Its function is as follows. Catalyzes hydrolysis of the D-alanyl-D-alanine dipeptide. May play a role in immunity or defense against glycopeptide antibiotics (perhaps at a moderate level) in the soil environment. Might confer vancomycin resistance to S.coelicolor. This chain is D-alanyl-D-alanine dipeptidase (vanX), found in Streptomyces coelicolor (strain ATCC BAA-471 / A3(2) / M145).